The sequence spans 225 residues: Probable iron export ATP-binding protein FetA (225 aa).

The ABC transporter domain occupies 8 to 225; that stretch reads LQLQNVGYLA…EMQEARYELA (218 aa). 40 to 47 contacts ATP; it reads GPSGCGKS.

It belongs to the ABC transporter superfamily. In terms of assembly, the complex is composed of two ATP-binding proteins (FetA) and two transmembrane proteins (FetB).

The protein resides in the cell inner membrane. Part of the ABC transporter complex FetAB, which is probably involved in iron export and enhances resistance to H(2)O(2)-mediated oxidative stress. Probably responsible for energy coupling to the transport system. The chain is Probable iron export ATP-binding protein FetA (fetA) from Escherichia coli (strain K12).